A 425-amino-acid polypeptide reads, in one-letter code: Histidine--tRNA ligase (425 aa).

This sequence belongs to the class-II aminoacyl-tRNA synthetase family. Homodimer.

The protein localises to the cytoplasm. It carries out the reaction tRNA(His) + L-histidine + ATP = L-histidyl-tRNA(His) + AMP + diphosphate + H(+). The protein is Histidine--tRNA ligase of Aeromonas hydrophila subsp. hydrophila (strain ATCC 7966 / DSM 30187 / BCRC 13018 / CCUG 14551 / JCM 1027 / KCTC 2358 / NCIMB 9240 / NCTC 8049).